The chain runs to 474 residues: tRNA-2-methylthio-N(6)-dimethylallyladenosine synthase (474 aa).

Residues Lys3–Ser120 form the MTTase N-terminal domain. [4Fe-4S] cluster is bound by residues Cys12, Cys49, Cys83, Cys157, Cys161, and Cys164. Residues Arg143–Arg375 form the Radical SAM core domain. The region spanning Arg378–Arg441 is the TRAM domain.

The protein belongs to the methylthiotransferase family. MiaB subfamily. As to quaternary structure, monomer. [4Fe-4S] cluster serves as cofactor.

The protein localises to the cytoplasm. The catalysed reaction is N(6)-dimethylallyladenosine(37) in tRNA + (sulfur carrier)-SH + AH2 + 2 S-adenosyl-L-methionine = 2-methylsulfanyl-N(6)-dimethylallyladenosine(37) in tRNA + (sulfur carrier)-H + 5'-deoxyadenosine + L-methionine + A + S-adenosyl-L-homocysteine + 2 H(+). Its function is as follows. Catalyzes the methylthiolation of N6-(dimethylallyl)adenosine (i(6)A), leading to the formation of 2-methylthio-N6-(dimethylallyl)adenosine (ms(2)i(6)A) at position 37 in tRNAs that read codons beginning with uridine. The polypeptide is tRNA-2-methylthio-N(6)-dimethylallyladenosine synthase (Vibrio campbellii (strain ATCC BAA-1116)).